We begin with the raw amino-acid sequence, 417 residues long: Hydroxysteroid dehydrogenase-like protein 2 (417 aa).

NADP(+) contacts are provided by residues 17–23, Lys-42, and Asp-74; that span reads GASRGIG. The Proton acceptor role is filled by Tyr-168. NADP(+) is bound at residue Lys-172. The region spanning 306-414 is the SCP2 domain; sequence ASPLQETFKA…KLEKILGQMN (109 aa).

Belongs to the short-chain dehydrogenases/reductases (SDR) family.

Its subcellular location is the peroxisome. The protein resides in the mitochondrion. Its function is as follows. Has apparently no steroid dehydrogenase activity. Might act as a metabolic regulator that affects systemic adaptation to nutritional cues. The polypeptide is Hydroxysteroid dehydrogenase-like protein 2 (hsdl2) (Xenopus laevis (African clawed frog)).